The chain runs to 1192 residues: Leucine-rich repeat receptor protein kinase EMS1 (1192 aa).

The N-terminal stretch at 1–18 (MAFLTALFLFLFFSFSSS) is a signal peptide. Asn47 carries an N-linked (GlcNAc...) asparagine glycan. LRR repeat units lie at residues 64–87 (LGRV…EISS), 90–112 (NLRE…IWNL), 114–137 (HLQT…SELP), 138–160 (QLLY…FFIS), 163–185 (ALSS…IGKL), 187–209 (NLSN…IGNI), 235–257 (HLAK…FGEL), 259–281 (NLSI…LGNC), 283–304 (SLKS…ELSE), 330–352 (VLDS…IEDC), 354–376 (MLKH…LCGS), 378–400 (SLEA…FDGC), 402–425 (SLGE…WKLP), 426–447 (LMAL…LWKS), 449–471 (NLME…IGNA), 473–496 (SLKR…GKLT), 497–520 (SLSV…GDCT), 521–543 (SLTT…ITAL), 545–567 (QLQC…PSAY), 581–603 (HHGI…LGEC), 605–628 (VLVE…SRLT), 629–651 (NLTI…MGNS), 653–675 (KLQG…FGLL), 677–697 (SLVK…ASLG), 701–723 (ELTH…LSTM), 725–748 (KLVG…GNLT), 749–772 (QLEY…CGLP), and 773–795 (NLEF…GVCQ). Residues Asn171, Asn187, and Asn208 are each glycosylated (N-linked (GlcNAc...) asparagine). A glycan (N-linked (GlcNAc...) asparagine) is linked at Asn259. N-linked (GlcNAc...) asparagine glycosylation is found at Asn414 and Asn435. N-linked (GlcNAc...) asparagine glycosylation is present at Asn555. Asn629 carries an N-linked (GlcNAc...) asparagine glycan. N-linked (GlcNAc...) asparagine glycans are attached at residues Asn682, Asn711, and Asn746. A helical membrane pass occupies residues 828-848 (WGIAGLMLGFTIIVFVFVFSL). Thr914 bears the Phosphothreonine mark. Residues 917–1192 (FSKKNIIGDG…LDVLKALKEI (276 aa)) form the Protein kinase domain. Residues 923–931 (IGDGGFGTV) and Lys945 contribute to the ATP site. A Phosphotyrosine modification is found at Tyr990. Asp1043 functions as the Proton acceptor in the catalytic mechanism. Residue Tyr1085 is modified to Phosphotyrosine.

It belongs to the protein kinase superfamily. Ser/Thr protein kinase family. In terms of assembly, interacts with TPD1. In terms of processing, autophosphorylates in vitro. In terms of tissue distribution, present in young buds, open flowers and siliques but absent from mature leaves and roots. Strongly expressed in the young organ primordia, and as the anthers and ovules developed, became focused in the microsporangia and in the distal and chalazal regions of the ovule. In cv. Landsberg erecta, only expressed in the anthers of young floral buds.

It localises to the cell membrane. It catalyses the reaction L-seryl-[protein] + ATP = O-phospho-L-seryl-[protein] + ADP + H(+). The catalysed reaction is L-threonyl-[protein] + ATP = O-phospho-L-threonyl-[protein] + ADP + H(+). Functionally, receptor with a serine/threonine-protein kinase activity required for the specification of the correct number of male archesporial initials and for the subsequent specification of tapetal and middle cell layer identities. In seeds, required for enhancing cell size and the rate of embryonic development. The sequence is that of Leucine-rich repeat receptor protein kinase EMS1 from Arabidopsis thaliana (Mouse-ear cress).